Here is a 494-residue protein sequence, read N- to C-terminus: Uric acid degradation bifunctional protein PucL (494 aa).

Residues 1–174 (MFTMDDLNQM…EKGETQMKRT (174 aa)) form an OHCU decarboxylase region. The Proton donor; for OHCU decarboxylase activity role is filled by His-68. 5-hydroxy-2-oxo-4-ureido-2,5-dihydro-1H-imidazole-5-carboxylate-binding positions include Pro-69, 81 to 85 (SVREQ), and 116 to 120 (FILAV). The segment at 175–494 (MSYGKGNVFA…AAEKCRSLKA (320 aa)) is urate oxidase. The active-site Charge relay system; for urate oxidase activity is the Lys-179. Residue Lys-190 is the Charge relay system of the active site. Thr-239 acts as the Charge relay system; for urate oxidase activity in catalysis. Thr-239, Asp-240, Phe-349, Arg-366, Ile-414, Gln-415, and Asn-441 together coordinate urate.

The protein in the N-terminal section; belongs to the OHCU decarboxylase family. In the C-terminal section; belongs to the uricase family.

It catalyses the reaction 5-hydroxy-2-oxo-4-ureido-2,5-dihydro-1H-imidazole-5-carboxylate + H(+) = (S)-allantoin + CO2. The enzyme catalyses urate + O2 + H2O = 5-hydroxyisourate + H2O2. It functions in the pathway purine metabolism; urate degradation; (S)-allantoin from urate: step 1/3. It participates in purine metabolism; urate degradation; (S)-allantoin from urate: step 3/3. Catalyzes two steps in the degradation of uric acid, i.e. the oxidation of uric acid to 5-hydroxyisourate (HIU) and the stereoselective decarboxylation of 2-oxo-4-hydroxy-4-carboxy-5-ureidoimidazoline (OHCU) to (S)-allantoin. This Bacillus subtilis (strain 168) protein is Uric acid degradation bifunctional protein PucL (pucL).